The following is a 526-amino-acid chain: GMP synthase [glutamine-hydrolyzing] (526 aa).

One can recognise a Glutamine amidotransferase type-1 domain in the interval 13-204; the sequence is TVLVVDFGAQ…LYRGAGLSPD (192 aa). The Nucleophile role is filled by Cys-90. Active-site residues include His-178 and Glu-180. Residues 205–400 form the GMPS ATP-PPase domain; the sequence is WTTGNVIEEQ…LGLPDEIVQR (196 aa). Residue 232-238 participates in ATP binding; the sequence is SGGVDSA.

Homodimer.

It carries out the reaction XMP + L-glutamine + ATP + H2O = GMP + L-glutamate + AMP + diphosphate + 2 H(+). The protein operates within purine metabolism; GMP biosynthesis; GMP from XMP (L-Gln route): step 1/1. In terms of biological role, catalyzes the synthesis of GMP from XMP. This Streptomyces coelicolor (strain ATCC BAA-471 / A3(2) / M145) protein is GMP synthase [glutamine-hydrolyzing] (guaA).